We begin with the raw amino-acid sequence, 435 residues long: NADH-quinone oxidoreductase subunit D (435 aa).

The protein belongs to the complex I 49 kDa subunit family. As to quaternary structure, NDH-1 is composed of 14 different subunits. Subunits NuoB, C, D, E, F, and G constitute the peripheral sector of the complex.

Its subcellular location is the cell inner membrane. It carries out the reaction a quinone + NADH + 5 H(+)(in) = a quinol + NAD(+) + 4 H(+)(out). Its function is as follows. NDH-1 shuttles electrons from NADH, via FMN and iron-sulfur (Fe-S) centers, to quinones in the respiratory chain. The immediate electron acceptor for the enzyme in this species is believed to be ubiquinone. Couples the redox reaction to proton translocation (for every two electrons transferred, four hydrogen ions are translocated across the cytoplasmic membrane), and thus conserves the redox energy in a proton gradient. The chain is NADH-quinone oxidoreductase subunit D from Xylella fastidiosa (strain M23).